Reading from the N-terminus, the 139-residue chain is Bilirubin-inducible fluorescent protein UnaG (139 aa).

Residues Asn-57, Thr-61, Ser-80, Arg-112, and 132-134 (RSY) contribute to the (4Z,15Z)-bilirubin IXalpha site.

It belongs to the calycin superfamily. Fatty-acid binding protein (FABP) family. In terms of assembly, monomer. Detected in small-diameter muscle fibers from the white muscle layer from juvenile animals (glass eels) (at protein level). Detected in small-diameter muscle fibers from juvenile animals (glass eels).

It localises to the cytoplasm. In terms of biological role, beta-barrel protein that binds unconjugated bilirubin with high affinity. Excitation of the bilirubin-bound protein gives rise to green fluorescence, both under normoxia and hypoxia. The apoprotein is not fluorescent. Does not emit fluorescence in the presence of ditauro-bilirubin, urobilin or biliverdin. The chain is Bilirubin-inducible fluorescent protein UnaG from Anguilla japonica (Japanese eel).